The primary structure comprises 280 residues: MKRMIIDGKEISNRIKEEVKREIQEFGYKPRLAILMAGDDESSKVYANSKVKACESVGIEAKVYYFSEKEEDKFFDTLEKLNEDKDTHGIMIEMPLPKGFDVDKVYDTINPYKDVDCISNYNMGRLFAGKPLFVPCTPKAIIHILENTGVDLEGKHAVVIGRSNILGKPVAKLLLDKNCTVTVCHSKTKDLAYHTKQADVLVVAAGKMNLVRGDMVKEGVVLIDAGINVHEGKIYGDADFESIKDKASYVTPVPGGVGPVTTAMILKNTLEAFKYAVKSL.

NADP(+)-binding positions include Gly161–Ser163, Ser186, and Ile227.

Belongs to the tetrahydrofolate dehydrogenase/cyclohydrolase family. Homodimer.

It catalyses the reaction (6R)-5,10-methylene-5,6,7,8-tetrahydrofolate + NADP(+) = (6R)-5,10-methenyltetrahydrofolate + NADPH. The catalysed reaction is (6R)-5,10-methenyltetrahydrofolate + H2O = (6R)-10-formyltetrahydrofolate + H(+). It participates in one-carbon metabolism; tetrahydrofolate interconversion. Functionally, catalyzes the oxidation of 5,10-methylenetetrahydrofolate to 5,10-methenyltetrahydrofolate and then the hydrolysis of 5,10-methenyltetrahydrofolate to 10-formyltetrahydrofolate. The sequence is that of Bifunctional protein FolD from Caldanaerobacter subterraneus subsp. tengcongensis (strain DSM 15242 / JCM 11007 / NBRC 100824 / MB4) (Thermoanaerobacter tengcongensis).